The following is a 687-amino-acid chain: Amine oxidase [copper-containing] gamma 2 (687 aa).

The first 24 residues, 1–24 (MVELSFSQLLVLLLSLLFLFTTLA), serve as a signal peptide directing secretion. N-linked (GlcNAc...) asparagine glycosylation occurs at asparagine 154. The cysteines at positions 169 and 191 are disulfide-linked. Asparagine 244 carries N-linked (GlcNAc...) asparagine glycosylation. Residue 333-344 (YMDAGEFGLGPS) coordinates substrate. Aspartate 335 serves as the catalytic Proton acceptor. Cysteines 354 and 380 form a disulfide. Residue 420–425 (VGNYDY) participates in substrate binding. The active-site Schiff-base intermediate with substrate; via topaquinone is the tyrosine 423. Position 423 is a 2',4',5'-topaquinone (tyrosine 423). Histidine 480 and histidine 482 together coordinate Cu cation. Aspartate 489, methionine 490, and aspartate 491 together coordinate Mn(2+). N-linked (GlcNAc...) asparagine glycosylation is found at asparagine 497 and asparagine 598. Aspartate 632 and isoleucine 633 together coordinate Mn(2+). Histidine 643 contributes to the Cu cation binding site.

Belongs to the copper/topaquinone oxidase family. As to quaternary structure, homodimer. Requires Cu cation as cofactor. Zn(2+) is required as a cofactor. L-topaquinone serves as cofactor. It depends on Mn(2+) as a cofactor. In terms of processing, topaquinone (TPQ) is generated by copper-dependent autoxidation of a specific tyrosyl residue. Expressed in roots, leaves and cotyledons.

Its subcellular location is the secreted. The protein resides in the extracellular space. It is found in the apoplast. The enzyme catalyses a primary methyl amine + O2 + H2O = an aldehyde + H2O2 + NH4(+). It participates in amine and polyamine degradation; putrescine degradation. In terms of biological role, copper amine oxidase that can use putrescine and spermidine as substrates. In Arabidopsis thaliana (Mouse-ear cress), this protein is Amine oxidase [copper-containing] gamma 2.